The primary structure comprises 254 residues: Leucyl/phenylalanyl-tRNA--protein transferase (254 aa).

The protein belongs to the L/F-transferase family.

Its subcellular location is the cytoplasm. The enzyme catalyses N-terminal L-lysyl-[protein] + L-leucyl-tRNA(Leu) = N-terminal L-leucyl-L-lysyl-[protein] + tRNA(Leu) + H(+). It carries out the reaction N-terminal L-arginyl-[protein] + L-leucyl-tRNA(Leu) = N-terminal L-leucyl-L-arginyl-[protein] + tRNA(Leu) + H(+). The catalysed reaction is L-phenylalanyl-tRNA(Phe) + an N-terminal L-alpha-aminoacyl-[protein] = an N-terminal L-phenylalanyl-L-alpha-aminoacyl-[protein] + tRNA(Phe). Functionally, functions in the N-end rule pathway of protein degradation where it conjugates Leu, Phe and, less efficiently, Met from aminoacyl-tRNAs to the N-termini of proteins containing an N-terminal arginine or lysine. This is Leucyl/phenylalanyl-tRNA--protein transferase from Bordetella bronchiseptica (strain ATCC BAA-588 / NCTC 13252 / RB50) (Alcaligenes bronchisepticus).